Consider the following 111-residue polypeptide: Large ribosomal subunit protein uL23 (111 aa).

Belongs to the universal ribosomal protein uL23 family. Part of the 50S ribosomal subunit. Contacts protein L29, and trigger factor when it is bound to the ribosome.

Functionally, one of the early assembly proteins it binds 23S rRNA. One of the proteins that surrounds the polypeptide exit tunnel on the outside of the ribosome. Forms the main docking site for trigger factor binding to the ribosome. This chain is Large ribosomal subunit protein uL23, found in Chlamydia muridarum (strain MoPn / Nigg).